The primary structure comprises 1081 residues: DNA polymerase delta catalytic subunit (1081 aa).

Residues 1 to 22 form a disordered region; sequence MTSKRPGGSSFQPEVKRKRESD. Zn(2+)-binding residues include cysteine 981, cysteine 984, cysteine 998, and cysteine 1001. The CysA-type zinc-finger motif lies at 981–1001; it reads CLGCKSVLPRAESENAVCKHC. [4Fe-4S] cluster is bound by residues cysteine 1030, cysteine 1033, cysteine 1043, and cysteine 1048. A CysB motif motif is present at residues 1030-1048; the sequence is CQNCAKTMQDKVNCSARDC.

Belongs to the DNA polymerase type-B family. In terms of assembly, heterodimer with subunits of 125 kDa and 50 kDa. The 125 kDa subunit contains the polymerase active site and most likely the active site for the 3'-5' exonuclease activity. It depends on [4Fe-4S] cluster as a cofactor.

Its subcellular location is the nucleus. It catalyses the reaction DNA(n) + a 2'-deoxyribonucleoside 5'-triphosphate = DNA(n+1) + diphosphate. In terms of biological role, possesses two enzymatic activities: DNA synthesis (polymerase) and an exonucleolytic activity that degrades single stranded DNA in the 3'- to 5'-direction. Required with its accessory proteins (proliferating cell nuclear antigen (PCNA) and replication factor C (RFC) or activator 1) for leading strand synthesis. Also involved in completing Okazaki fragments initiated by the DNA polymerase alpha/primase complex. The protein is DNA polymerase delta catalytic subunit of Caenorhabditis elegans.